Consider the following 210-residue polypeptide: Large ribosomal subunit protein uL3 (210 aa).

Belongs to the universal ribosomal protein uL3 family. As to quaternary structure, part of the 50S ribosomal subunit. Forms a cluster with proteins L14 and L19.

In terms of biological role, one of the primary rRNA binding proteins, it binds directly near the 3'-end of the 23S rRNA, where it nucleates assembly of the 50S subunit. This chain is Large ribosomal subunit protein uL3, found in Lawsonia intracellularis (strain PHE/MN1-00).